The following is a 75-amino-acid chain: Sec-independent protein translocase protein TatA (75 aa).

A helical membrane pass occupies residues M1 to G21. The disordered stretch occupies residues D47–A75. Residues K53 to A75 are compositionally biased toward basic and acidic residues.

The protein belongs to the TatA/E family. As to quaternary structure, the Tat system comprises two distinct complexes: a TatABC complex, containing multiple copies of TatA, TatB and TatC subunits, and a separate TatA complex, containing only TatA subunits. Substrates initially bind to the TatABC complex, which probably triggers association of the separate TatA complex to form the active translocon.

It localises to the cell inner membrane. In terms of biological role, part of the twin-arginine translocation (Tat) system that transports large folded proteins containing a characteristic twin-arginine motif in their signal peptide across membranes. TatA could form the protein-conducting channel of the Tat system. The chain is Sec-independent protein translocase protein TatA from Sulfurovum sp. (strain NBC37-1).